Reading from the N-terminus, the 295-residue chain is Acetaldehyde dehydrogenase 2 (295 aa).

Residue 17–20 (TGNI) coordinates NAD(+). Residue C132 is the Acyl-thioester intermediate of the active site. NAD(+) is bound by residues 164 to 172 (SVGPASRAN) and N275.

Belongs to the acetaldehyde dehydrogenase family.

It carries out the reaction acetaldehyde + NAD(+) + CoA = acetyl-CoA + NADH + H(+). This Salinispora arenicola (strain CNS-205) protein is Acetaldehyde dehydrogenase 2.